A 93-amino-acid polypeptide reads, in one-letter code: Alpha-defensin 6/12 (93 aa).

A signal peptide spans 1–19; the sequence is MKTLILLSALVLLAFQVQA. Residues 20 to 60 constitute a propeptide that is removed on maturation; the sequence is DPIQNTDEETKTEEQPGEEDQAVSVSFGDPEGTSLQEESLR. Residues 23–54 form a disordered region; the sequence is QNTDEETKTEEQPGEEDQAVSVSFGDPEGTSL. 3 disulfides stabilise this stretch: C64/C92, C66/C81, and C71/C91.

Belongs to the alpha-defensin family. Paneth cells of the small bowel.

It localises to the secreted. Its function is as follows. Has broad-spectrum antimicrobial properties. Has antibacterial activity against the Gram-positive bacterium L.monocytogenes EGD and the Gram-negative bacteria E.coli ML-35p and avirulent S.typhimurium 7953, but not against the mouse-virulent S.typhimurium 14028S. Probably contributes to the antimicrobial barrier function of the small bowel mucosa. The protein is Alpha-defensin 6/12 (Defa6) of Mus musculus (Mouse).